A 187-amino-acid chain; its full sequence is Shikimate kinase (187 aa).

19–24 (GSGKST) is a binding site for ATP. Residue Ser-23 participates in Mg(2+) binding. The substrate site is built by Asp-41, Arg-65, and Gly-87. Arg-124 contacts ATP. Arg-143 contributes to the substrate binding site. Residue Arg-160 participates in ATP binding.

This sequence belongs to the shikimate kinase family. Monomer. The cofactor is Mg(2+).

The protein resides in the cytoplasm. It catalyses the reaction shikimate + ATP = 3-phosphoshikimate + ADP + H(+). The protein operates within metabolic intermediate biosynthesis; chorismate biosynthesis; chorismate from D-erythrose 4-phosphate and phosphoenolpyruvate: step 5/7. Catalyzes the specific phosphorylation of the 3-hydroxyl group of shikimic acid using ATP as a cosubstrate. The polypeptide is Shikimate kinase (Rippkaea orientalis (strain PCC 8801 / RF-1) (Cyanothece sp. (strain PCC 8801))).